Here is a 145-residue protein sequence, read N- to C-terminus: Putative antiporter subunit mnhG2 (145 aa).

The next 3 membrane-spanning stretches (helical) occupy residues 11-31 (IAAV…IGIV), 51-71 (VLLT…FFSV), and 72-92 (RLLL…HLVA).

The protein belongs to the CPA3 antiporters (TC 2.A.63) subunit G family. As to quaternary structure, may form a heterooligomeric complex that consists of seven subunits: mnhA2, mnhB2, mnhC2, mnhD2, mnhE2, mnhF2 and mnhG2.

The protein resides in the cell membrane. The chain is Putative antiporter subunit mnhG2 (mnhG2) from Staphylococcus aureus (strain MRSA252).